Consider the following 86-residue polypeptide: MPKSEIHPKWYPDAKVICNGEVVMTTGSTKPELHVDVWSGNHPFFTGTQKILDTEGRVDRFMKKYGMGSADSATSKETKESKKSDK.

The interval 65 to 86 (YGMGSADSATSKETKESKKSDK) is disordered. Over residues 74 to 86 (TSKETKESKKSDK) the composition is skewed to basic and acidic residues.

Belongs to the bacterial ribosomal protein bL31 family. Type A subfamily. As to quaternary structure, part of the 50S ribosomal subunit.

Its function is as follows. Binds the 23S rRNA. The chain is Large ribosomal subunit protein bL31 from Prochlorococcus marinus subsp. pastoris (strain CCMP1986 / NIES-2087 / MED4).